Reading from the N-terminus, the 273-residue chain is XIAP-associated factor 1 (273 aa).

Residues 22–80 form a TRAF-type zinc finger; the sequence is LHEAHCLRFIVLCPECEEPIPESKMKEHMEVVHQQTKESQQHPAKCKFCELAVQLSNLD. The segment at 181–228 is disordered; the sequence is GNRRSTVSKDVRPKTKNRNSSTKRETKKQNGTVALPLKSGLQQRADLP.

Interacts with BIRC1, BIRC2, BIRC3, BIRC4, BIRC7 and BIRC8. Part of an complex consisting of BIRC4, XAF1 and BIRC5; the complex formation requires IFN-beta stimulation. Interacts with RNF114, the interaction increases XAF1 stability and proapoptotic effects, and may regulate IFN signaling.

The protein localises to the cytoplasm. It is found in the nucleus. It localises to the mitochondrion. In terms of biological role, seems to function as a negative regulator of members of the IAP (inhibitor of apoptosis protein) family. Inhibits anti-caspase activity of BIRC4. Induces cleavage and inactivation of BIRC4 independent of caspase activation. Mediates TNF-alpha-induced apoptosis and is involved in apoptosis in trophoblast cells. May inhibit BIRC4 indirectly by activating the mitochondrial apoptosis pathway. After translocation to mitochondria, promotes translocation of BAX to mitochondria and cytochrome c release from mitochondria. Seems to promote the redistribution of BIRC4 from the cytoplasm to the nucleus, probably independent of BIRC4 inactivation which seems to occur in the cytoplasm. The BIRC4-XAF1 complex mediates down-regulation of BIRC5/survivin; the process requires the E3 ligase activity of BIRC4. Seems to be involved in cellular sensitivity to the proapoptotic actions of TRAIL. May be a tumor suppressor by mediating apoptosis resistance of cancer cells. This chain is XIAP-associated factor 1 (Xaf1), found in Mus musculus (Mouse).